The primary structure comprises 444 residues: Serine carboxypeptidase-like 50 (444 aa).

Positions 1-22 (MEQATTLFILLSTLLLAVSVES) are cleaved as a signal peptide. An intrachain disulfide couples Cys79 to Cys308. The active site involves Ser170. N-linked (GlcNAc...) asparagine glycosylation is present at Asn263. Residue Asp345 is part of the active site. A glycan (N-linked (GlcNAc...) asparagine) is linked at Asn361. The active site involves His403.

It belongs to the peptidase S10 family. As to expression, ubiquitous.

The protein localises to the secreted. In terms of biological role, probable carboxypeptidase. This Arabidopsis thaliana (Mouse-ear cress) protein is Serine carboxypeptidase-like 50 (SCPL50).